Reading from the N-terminus, the 453-residue chain is tRNA-2-methylthio-N(6)-dimethylallyladenosine synthase (453 aa).

An MTTase N-terminal domain is found at 21-137; the sequence is RGVYISTYGC…LPQLVAKSFA (117 aa). [4Fe-4S] cluster is bound by residues Cys30, Cys66, Cys100, Cys174, Cys178, and Cys181. The Radical SAM core domain occupies 160–389; it reads RNPGVATYVN…FDVHEAMAFE (230 aa). A TRAM domain is found at 392-453; that stretch reads KRYEGTTMKV…FPAVFRGEMI (62 aa).

It belongs to the methylthiotransferase family. MiaB subfamily. Monomer. Requires [4Fe-4S] cluster as cofactor.

The protein localises to the cytoplasm. It catalyses the reaction N(6)-dimethylallyladenosine(37) in tRNA + (sulfur carrier)-SH + AH2 + 2 S-adenosyl-L-methionine = 2-methylsulfanyl-N(6)-dimethylallyladenosine(37) in tRNA + (sulfur carrier)-H + 5'-deoxyadenosine + L-methionine + A + S-adenosyl-L-homocysteine + 2 H(+). In terms of biological role, catalyzes the methylthiolation of N6-(dimethylallyl)adenosine (i(6)A), leading to the formation of 2-methylthio-N6-(dimethylallyl)adenosine (ms(2)i(6)A) at position 37 in tRNAs that read codons beginning with uridine. The sequence is that of tRNA-2-methylthio-N(6)-dimethylallyladenosine synthase from Bdellovibrio bacteriovorus (strain ATCC 15356 / DSM 50701 / NCIMB 9529 / HD100).